A 463-amino-acid polypeptide reads, in one-letter code: Type II NADH:quinone oxidoreductase Ndh (463 aa).

Residues 21–25 (GSGFG) and Val-89 contribute to the FAD site. Glu-184 is a catalytic residue. FAD-binding positions include Asp-322 and 333-334 (AQ). A helical transmembrane segment spans residues 387–407 (FSGFIAWLIWLVLHLAYLIGF).

The protein belongs to the NADH dehydrogenase family. FAD serves as cofactor.

The protein resides in the cell inner membrane. It catalyses the reaction a quinone + NADH + H(+) = a quinol + NAD(+). The enzyme catalyses a menaquinone + NADH + H(+) = a menaquinol + NAD(+). It carries out the reaction a ubiquinone + NADH + H(+) = a ubiquinol + NAD(+). With respect to regulation, inhibited by phenothiazine analogs. Inhibited by 2-mercapto-quinazolinones. Not inhibited by classic inhibitors of type I NADH dehydrogenase, such as rotenone, piericidin A and pyridaben. In terms of biological role, alternative, nonproton pumping NADH:quinone oxidoreductase that delivers electrons to the respiratory chain by oxidation of NADH and reduction of quinones. Ndh is probably the main NADH dehydrogenase of M.tuberculosis. The polypeptide is Type II NADH:quinone oxidoreductase Ndh (Mycobacterium tuberculosis (strain ATCC 25618 / H37Rv)).